We begin with the raw amino-acid sequence, 1017 residues long: Multiple C2 domain and transmembrane region protein 14 (1017 aa).

The C2 1 domain maps to 1 to 110; the sequence is MADNVLRKLI…ASAGSETLVY (110 aa). Residues 139 to 231 are disordered; it reads AAPAATEPKP…PAEVKNPPIP (93 aa). The segment covering 141–153 has biased composition (low complexity); that stretch reads PAATEPKPEAAAA. Residues 154-213 show a composition bias toward basic and acidic residues; it reads TEEKPPEIAKAEDGKKETEAAKTEEKKEGDKKEEEKPKEEAKPDEKKPDAPPDTKAKKPD. Over residues 217-231 the composition is skewed to pro residues; the sequence is APPPPPAEVKNPPIP. C2 domains follow at residues 258-387, 420-554, and 587-714; these read DLEL…PQWY, DSGG…SRWF, and VTSD…LNSY. 5 residues coordinate Ca(2+): Asp-296, Asn-299, Asp-352, Thr-355, and Glu-359. The next 2 helical transmembrane spans lie at 851–871 and 957–977; these read VAIVLCPHLVLPTVFMYAFLI and ATCIFVVFCLFASFLFYIVPF.

It belongs to the MCTP family. The cofactor is Ca(2+). As to expression, expressed in incipient leaf primordia and in roots meristems. Observed in flowers.

It localises to the membrane. The protein resides in the vesicle. It is found in the golgi apparatus membrane. Functionally, may function as a signaling molecule by regulating the trafficking of other regulators. In Arabidopsis thaliana (Mouse-ear cress), this protein is Multiple C2 domain and transmembrane region protein 14.